Consider the following 313-residue polypeptide: Putative olfactory receptor 2B3 (313 aa).

Over Met1–Met25 the chain is Extracellular. Asn5 carries an N-linked (GlcNAc...) asparagine glycan. Residues Pro26–Cys49 traverse the membrane as a helical segment. Residues Ile50–Thr57 lie on the Cytoplasmic side of the membrane. A helical transmembrane segment spans residues Pro58–Pro79. The Extracellular segment spans residues His80–His100. A disulfide bond links Cys97 and Cys189. Residues Leu101 to Phe120 traverse the membrane as a helical segment. Over Asp121 to Trp139 the chain is Cytoplasmic. The helical transmembrane segment at Phe140–Leu158 threads the bilayer. Residues Gln159 to Ile195 lie on the Extracellular side of the membrane. A helical transmembrane segment spans residues Glu196 to Gly219. Topologically, residues Phe220–Lys236 are cytoplasmic. Residues Ala237 to Tyr259 form a helical membrane-spanning segment. Over Leu260–Lys272 the chain is Extracellular. A helical membrane pass occupies residues Met273–Leu292. The Cytoplasmic portion of the chain corresponds to Arg293–Lys313.

The protein belongs to the G-protein coupled receptor 1 family.

The protein resides in the cell membrane. In terms of biological role, odorant receptor. The sequence is that of Putative olfactory receptor 2B3 (OR2B3) from Homo sapiens (Human).